A 277-amino-acid chain; its full sequence is Large ribosomal subunit protein uL2 (277 aa).

2 disordered regions span residues 32 to 58 (KSLTKGKVSRAGRDSSGRISVRRRGGG) and 225 to 277 (VAMN…RRNN).

The protein belongs to the universal ribosomal protein uL2 family. As to quaternary structure, part of the 50S ribosomal subunit. Forms a bridge to the 30S subunit in the 70S ribosome.

Functionally, one of the primary rRNA binding proteins. Required for association of the 30S and 50S subunits to form the 70S ribosome, for tRNA binding and peptide bond formation. It has been suggested to have peptidyltransferase activity; this is somewhat controversial. Makes several contacts with the 16S rRNA in the 70S ribosome. The polypeptide is Large ribosomal subunit protein uL2 (Borrelia duttonii (strain Ly)).